The following is a 178-amino-acid chain: Conodipine-P1 (178 aa).

Positions Met1 to Ser24 are cleaved as a signal peptide. Pro38, Pro42, and Pro49 each carry 4-hydroxyproline; partial. Residue His54 is part of the active site. Positions Lys98 to Arg130 are cleaved as a propeptide — interchain peptide. Gln131 bears the Pyrrolidone carboxylic acid mark. Residue Pro137 is modified to 4-hydroxyproline; partial.

It belongs to the phospholipase A2 family. Group IX subfamily. Heterodimer of an alpha and a beta chain; probably disulfide-linked. Ca(2+) is required as a cofactor. Expressed by the venom duct.

It localises to the secreted. It carries out the reaction a 1,2-diacyl-sn-glycero-3-phosphocholine + H2O = a 1-acyl-sn-glycero-3-phosphocholine + a fatty acid + H(+). Functionally, catalyzes the calcium-dependent hydrolysis of the 2-acyl groups in 3-sn-phosphoglycerides. This Conus purpurascens (Purple cone) protein is Conodipine-P1.